A 938-amino-acid polypeptide reads, in one-letter code: Isoleucine--tRNA ligase (938 aa).

A 'HIGH' region motif is present at residues 58–68 (PYANGSIHIGH). Glu561 contacts L-isoleucyl-5'-AMP. The 'KMSKS' region signature appears at 602–606 (KMSKS). Residue Lys605 coordinates ATP. 4 residues coordinate Zn(2+): Cys901, Cys904, Cys921, and Cys924.

The protein belongs to the class-I aminoacyl-tRNA synthetase family. IleS type 1 subfamily. Monomer. It depends on Zn(2+) as a cofactor.

Its subcellular location is the cytoplasm. It carries out the reaction tRNA(Ile) + L-isoleucine + ATP = L-isoleucyl-tRNA(Ile) + AMP + diphosphate. Its function is as follows. Catalyzes the attachment of isoleucine to tRNA(Ile). As IleRS can inadvertently accommodate and process structurally similar amino acids such as valine, to avoid such errors it has two additional distinct tRNA(Ile)-dependent editing activities. One activity is designated as 'pretransfer' editing and involves the hydrolysis of activated Val-AMP. The other activity is designated 'posttransfer' editing and involves deacylation of mischarged Val-tRNA(Ile). The chain is Isoleucine--tRNA ligase from Citrobacter koseri (strain ATCC BAA-895 / CDC 4225-83 / SGSC4696).